Here is a 461-residue protein sequence, read N- to C-terminus: Photosystem II CP43 reaction center protein (461 aa).

A propeptide spanning residues 1-2 is cleaved from the precursor; sequence ME. Thr3 is modified (N-acetylthreonine). Thr3 carries the phosphothreonine modification. Helical transmembrane passes span 57–81, 122–143, 166–188, 243–263, and 279–300; these read LFEVAHFIPEKPMYEQGLILLPHLA, IIGPEVLEESFPFFGYDWKDKN, KAMFFGGVYDTWAPGGGDVRVIS, KPFSWARRALVWSGEAYLSYS, and WFNNTAYPSEFFGPTGPEASQA. Glu355 is a [CaMn4O5] cluster binding site. Residues 435–459 traverse the membrane as a helical segment; that stretch reads RARAASGGFEKGLDRENEPVLSMKL.

Belongs to the PsbB/PsbC family. PsbC subfamily. As to quaternary structure, PSII is composed of 1 copy each of membrane proteins PsbA, PsbB, PsbC, PsbD, PsbE, PsbF, PsbH, PsbI, PsbJ, PsbK, PsbL, PsbM, PsbT, PsbX, PsbY, PsbZ, Psb30/Ycf12, at least 3 peripheral proteins of the oxygen-evolving complex and a large number of cofactors. It forms dimeric complexes. The cofactor is Binds multiple chlorophylls and provides some of the ligands for the Ca-4Mn-5O cluster of the oxygen-evolving complex. It may also provide a ligand for a Cl- that is required for oxygen evolution. PSII binds additional chlorophylls, carotenoids and specific lipids..

Its subcellular location is the plastid. It localises to the cyanelle thylakoid membrane. Its function is as follows. One of the components of the core complex of photosystem II (PSII). It binds chlorophyll and helps catalyze the primary light-induced photochemical processes of PSII. PSII is a light-driven water:plastoquinone oxidoreductase, using light energy to abstract electrons from H(2)O, generating O(2) and a proton gradient subsequently used for ATP formation. The sequence is that of Photosystem II CP43 reaction center protein from Cyanophora paradoxa.